The sequence spans 350 residues: Ubiquitin carboxyl-terminal hydrolase 11 (350 aa).

A USP domain is found at 49 to 344; it reads KGLYNVSGND…SACLLFYEME (296 aa). The active-site Nucleophile is Cys59. The Proton acceptor role is filled by His302.

The protein belongs to the peptidase C19 family.

It carries out the reaction Thiol-dependent hydrolysis of ester, thioester, amide, peptide and isopeptide bonds formed by the C-terminal Gly of ubiquitin (a 76-residue protein attached to proteins as an intracellular targeting signal).. This is Ubiquitin carboxyl-terminal hydrolase 11 (ubp11) from Schizosaccharomyces pombe (strain 972 / ATCC 24843) (Fission yeast).